A 72-amino-acid chain; its full sequence is SRY-related protein MG42 (72 aa).

The segment at residues 1–69 (VKRPMNAFMV…KHMADYPNYK (69 aa)) is a DNA-binding region (HMG box).

The protein resides in the nucleus. The chain is SRY-related protein MG42 from Tarentola mauritanica (Common wall gecko).